The sequence spans 451 residues: UPF0210 protein lin0538 (451 aa).

It belongs to the UPF0210 family. In terms of assembly, homodimer.

The sequence is that of UPF0210 protein lin0538 from Listeria innocua serovar 6a (strain ATCC BAA-680 / CLIP 11262).